Consider the following 519-residue polypeptide: NADH-ubiquinone oxidoreductase chain 4 (519 aa).

The next 14 membrane-spanning stretches (helical) occupy residues 2 to 22 (SGLL…ILSF), 68 to 88 (IAFI…ILFD), 112 to 132 (VDGL…IALI), 146 to 166 (LIII…LDVL), 167 to 187 (LFYI…GLFG), 196 to 216 (FYIF…ILTM), 239 to 259 (IFLF…VFLN), 270 to 290 (PLGG…YGIF), 304 to 324 (YTSI…FSTL), 333 to 353 (IAYS…SNII), 360 to 380 (ILLG…AGGV), 399 to 419 (VMPL…GAPL), 437 to 457 (LPLL…YTIY), and 484 to 504 (FFLL…PSFI).

The protein belongs to the complex I subunit 4 family.

Its subcellular location is the mitochondrion membrane. The enzyme catalyses a ubiquinone + NADH + 5 H(+)(in) = a ubiquinol + NAD(+) + 4 H(+)(out). In terms of biological role, core subunit of the mitochondrial membrane respiratory chain NADH dehydrogenase (Complex I) that is believed to belong to the minimal assembly required for catalysis. Complex I functions in the transfer of electrons from NADH to the respiratory chain. The immediate electron acceptor for the enzyme is believed to be ubiquinone. This Podospora anserina (strain S / ATCC MYA-4624 / DSM 980 / FGSC 10383) (Pleurage anserina) protein is NADH-ubiquinone oxidoreductase chain 4 (ND4).